Reading from the N-terminus, the 306-residue chain is UDP-3-O-acyl-N-acetylglucosamine deacetylase (306 aa).

Residues His79, His238, and Asp242 each coordinate Zn(2+). His265 (proton donor) is an active-site residue.

The protein belongs to the LpxC family. Zn(2+) serves as cofactor.

It catalyses the reaction a UDP-3-O-[(3R)-3-hydroxyacyl]-N-acetyl-alpha-D-glucosamine + H2O = a UDP-3-O-[(3R)-3-hydroxyacyl]-alpha-D-glucosamine + acetate. The protein operates within glycolipid biosynthesis; lipid IV(A) biosynthesis; lipid IV(A) from (3R)-3-hydroxytetradecanoyl-[acyl-carrier-protein] and UDP-N-acetyl-alpha-D-glucosamine: step 2/6. In terms of biological role, catalyzes the hydrolysis of UDP-3-O-myristoyl-N-acetylglucosamine to form UDP-3-O-myristoylglucosamine and acetate, the committed step in lipid A biosynthesis. The chain is UDP-3-O-acyl-N-acetylglucosamine deacetylase from Shewanella denitrificans (strain OS217 / ATCC BAA-1090 / DSM 15013).